We begin with the raw amino-acid sequence, 113 residues long: Nucleoid-associated protein Athe_1143 (113 aa).

It belongs to the YbaB/EbfC family. Homodimer.

It localises to the cytoplasm. Its subcellular location is the nucleoid. Its function is as follows. Binds to DNA and alters its conformation. May be involved in regulation of gene expression, nucleoid organization and DNA protection. In Caldicellulosiruptor bescii (strain ATCC BAA-1888 / DSM 6725 / KCTC 15123 / Z-1320) (Anaerocellum thermophilum), this protein is Nucleoid-associated protein Athe_1143.